An 884-amino-acid chain; its full sequence is Alanine--tRNA ligase (884 aa).

Histidine 562, histidine 566, cysteine 676, and histidine 680 together coordinate Zn(2+).

Belongs to the class-II aminoacyl-tRNA synthetase family. Zn(2+) is required as a cofactor.

It is found in the cytoplasm. The catalysed reaction is tRNA(Ala) + L-alanine + ATP = L-alanyl-tRNA(Ala) + AMP + diphosphate. Its function is as follows. Catalyzes the attachment of alanine to tRNA(Ala) in a two-step reaction: alanine is first activated by ATP to form Ala-AMP and then transferred to the acceptor end of tRNA(Ala). Also edits incorrectly charged Ser-tRNA(Ala) and Gly-tRNA(Ala) via its editing domain. This Jannaschia sp. (strain CCS1) protein is Alanine--tRNA ligase.